The sequence spans 138 residues: DNA-directed RNA polymerase subunit omega (138 aa).

The protein belongs to the RNA polymerase subunit omega family. In terms of assembly, the RNAP catalytic core consists of 2 alpha, 1 beta, 1 beta' and 1 omega subunit. When a sigma factor is associated with the core the holoenzyme is formed, which can initiate transcription.

It catalyses the reaction RNA(n) + a ribonucleoside 5'-triphosphate = RNA(n+1) + diphosphate. In terms of biological role, promotes RNA polymerase assembly. Latches the N- and C-terminal regions of the beta' subunit thereby facilitating its interaction with the beta and alpha subunits. The sequence is that of DNA-directed RNA polymerase subunit omega from Thermodesulfovibrio yellowstonii (strain ATCC 51303 / DSM 11347 / YP87).